A 250-amino-acid chain; its full sequence is Small ribosomal subunit protein uS2 (250 aa).

This sequence belongs to the universal ribosomal protein uS2 family.

This is Small ribosomal subunit protein uS2 from Delftia acidovorans (strain DSM 14801 / SPH-1).